Reading from the N-terminus, the 470-residue chain is D-serine/D-alanine/glycine transporter (470 aa).

A run of 12 helical transmembrane segments spans residues 30–50 (LIAI…KTIS), 51–71 (LAGP…FFVM), 102–122 (FTGW…VVAI), 137–157 (VASL…VKMF), 162–182 (FWFA…GLVM), 211–231 (LSGF…IELV), 256–276 (IIMF…WSSV), 283–303 (FVEL…NFVV), 350–370 (FSCI…SVIG), 371–391 (AFTM…TIIL), 413–433 (PLGK…VVLL), and 441–461 (QALL…LFIG).

This sequence belongs to the amino acid-polyamine-organocation (APC) superfamily. Amino acid transporter (AAT) (TC 2.A.3.1) family.

Its subcellular location is the cell inner membrane. It catalyses the reaction D-alanine(in) + H(+)(in) = D-alanine(out) + H(+)(out). The enzyme catalyses D-serine(out) + H(+)(out) = D-serine(in) + H(+)(in). It carries out the reaction glycine(in) + H(+)(in) = glycine(out) + H(+)(out). Its function is as follows. Permease that is involved in the transport across the cytoplasmic membrane of D-alanine, D-serine and glycine. This chain is D-serine/D-alanine/glycine transporter (cycA), found in Escherichia coli O157:H7.